The sequence spans 455 residues: Glutamate--tRNA ligase (455 aa).

Positions 8–18 (PSPTGYLHIGG) match the 'HIGH' region motif. The short motif at 231–235 (RLSKR) is the 'KMSKS' region element. Lys234 lines the ATP pocket.

It belongs to the class-I aminoacyl-tRNA synthetase family. Glutamate--tRNA ligase type 1 subfamily. In terms of assembly, monomer.

The protein resides in the cytoplasm. The catalysed reaction is tRNA(Glu) + L-glutamate + ATP = L-glutamyl-tRNA(Glu) + AMP + diphosphate. In terms of biological role, catalyzes the attachment of glutamate to tRNA(Glu) in a two-step reaction: glutamate is first activated by ATP to form Glu-AMP and then transferred to the acceptor end of tRNA(Glu). This chain is Glutamate--tRNA ligase, found in Vesicomyosocius okutanii subsp. Calyptogena okutanii (strain HA).